The primary structure comprises 335 residues: MSNDHLETTGSSDPNTNLLKYLPIVLNPDRTITRPIQIPSTAASPDPTSSSPVLTKDLALNPLHNTFVRLFLPRHALYNSAKLPLVVYFHGGGFILFSAASTIFHDFCCEMAVHAGVVIASVDYRLAPEHRLPAAYDDAMEALQWIKDSRDEWLTNFADFSNCFIMGESAGGNIAYHAGLRAAAVADELLPLKIKGLVLDEPGFGGSKRTGSELRLANDSRLPTFVLDLIWELSLPMGADRDHEYCNPTAESEPLYSFDKIRSLGWRVMVVGCHGDPMIDRQMELAERLEKKGVDVVAQFDVGGYHAVKLEDPEKAKQFFVILKKFVVDSCTTKL.

Positions His-90–Gly-92 match the Involved in the stabilization of the negatively charged intermediate by the formation of the oxyanion hole motif. Residues Gly-92 to Gly-93, Ser-169, and Ala-170 contribute to the paraoxon site. The active site involves Ser-169. Catalysis depends on residues Asp-276 and His-306.

This sequence belongs to the 'GDXG' lipolytic enzyme family.

It catalyses the reaction a carboxylic ester + H2O = an alcohol + a carboxylate + H(+). Is inhibited by the organophosphates paraoxon and dimethylchlorophosphate (DMCP). In terms of biological role, carboxylesterase acting on esters with varying acyl chain length. The chain is Carboxylesterase 1 (CXE1) from Actinidia eriantha (Velvet vine).